The chain runs to 429 residues: Serine hydroxymethyltransferase (429 aa).

(6S)-5,6,7,8-tetrahydrofolate-binding positions include L126 and 130–132 (GHL). K235 carries the post-translational modification N6-(pyridoxal phosphate)lysine. 359 to 361 (SPF) serves as a coordination point for (6S)-5,6,7,8-tetrahydrofolate.

Belongs to the SHMT family. As to quaternary structure, homodimer. Requires pyridoxal 5'-phosphate as cofactor.

It is found in the cytoplasm. It carries out the reaction (6R)-5,10-methylene-5,6,7,8-tetrahydrofolate + glycine + H2O = (6S)-5,6,7,8-tetrahydrofolate + L-serine. Its pathway is one-carbon metabolism; tetrahydrofolate interconversion. It participates in amino-acid biosynthesis; glycine biosynthesis; glycine from L-serine: step 1/1. Its function is as follows. Catalyzes the reversible interconversion of serine and glycine with tetrahydrofolate (THF) serving as the one-carbon carrier. This reaction serves as the major source of one-carbon groups required for the biosynthesis of purines, thymidylate, methionine, and other important biomolecules. Also exhibits THF-independent aldolase activity toward beta-hydroxyamino acids, producing glycine and aldehydes, via a retro-aldol mechanism. This chain is Serine hydroxymethyltransferase, found in Parasynechococcus marenigrum (strain WH8102).